Consider the following 429-residue polypeptide: Adenylosuccinate synthetase (429 aa).

Residues 12–18 (GDEGKGK) and 40–42 (GHT) contribute to the GTP site. Asp-13 acts as the Proton acceptor in catalysis. Positions 13 and 40 each coordinate Mg(2+). IMP contacts are provided by residues 13–16 (DEGK), 38–41 (NAGH), Thr-128, Arg-142, Gln-223, Thr-238, and Arg-302. The Proton donor role is filled by His-41. Residue 298–304 (TVTKRPR) participates in substrate binding. Residues Arg-304, 330–332 (CLD), and 412–414 (SVG) each bind GTP.

Belongs to the adenylosuccinate synthetase family. As to quaternary structure, homodimer. The cofactor is Mg(2+).

Its subcellular location is the cytoplasm. It catalyses the reaction IMP + L-aspartate + GTP = N(6)-(1,2-dicarboxyethyl)-AMP + GDP + phosphate + 2 H(+). Its pathway is purine metabolism; AMP biosynthesis via de novo pathway; AMP from IMP: step 1/2. Functionally, plays an important role in the de novo pathway of purine nucleotide biosynthesis. Catalyzes the first committed step in the biosynthesis of AMP from IMP. The chain is Adenylosuccinate synthetase from Lactiplantibacillus plantarum (strain ATCC BAA-793 / NCIMB 8826 / WCFS1) (Lactobacillus plantarum).